The sequence spans 99 residues: uncharacterized protein (99 aa).

A helical transmembrane segment spans residues 74–90 (FLSLPLGHSYLFLFCFW).

The protein localises to the membrane. This is an uncharacterized protein from Saccharomyces cerevisiae (strain ATCC 204508 / S288c) (Baker's yeast).